We begin with the raw amino-acid sequence, 215 residues long: Osteoclast-stimulating factor 1 (215 aa).

Ser-2 is subject to N-acetylserine. The 60-residue stretch at 12-71 (GQVKVFRALYTFEPRTPDELYFEEGDIIYITDMSDTSWWKGTCKGRTGLIPSNYVAEQAE) folds into the SH3 domain. ANK repeat units follow at residues 72–101 (SIDN…GVNG), 105–135 (AGST…ELNQ), and 139–168 (LGDT…RTDL). The interval 192–215 (KQQGTDGARTLSNAEDYLDDEDSD) is disordered. Position 201 is a phosphothreonine (Thr-201). A phosphoserine mark is found at Ser-203 and Ser-214.

Interacts with C-SRC and SMN1. Interacts with FASLG.

Its subcellular location is the cytoplasm. In terms of biological role, induces bone resorption, acting probably through a signaling cascade which results in the secretion of factor(s) enhancing osteoclast formation and activity. The protein is Osteoclast-stimulating factor 1 (Ostf1) of Mus musculus (Mouse).